The primary structure comprises 354 residues: DNA replication and repair protein RecF (354 aa).

ATP is bound at residue 30-37; it reads GDNGSGKT.

It belongs to the RecF family.

It is found in the cytoplasm. Its function is as follows. The RecF protein is involved in DNA metabolism; it is required for DNA replication and normal SOS inducibility. RecF binds preferentially to single-stranded, linear DNA. It also seems to bind ATP. The chain is DNA replication and repair protein RecF from Idiomarina loihiensis (strain ATCC BAA-735 / DSM 15497 / L2-TR).